We begin with the raw amino-acid sequence, 142 residues long: Large ribosomal subunit protein uL13 (142 aa).

The protein belongs to the universal ribosomal protein uL13 family. Part of the 50S ribosomal subunit.

In terms of biological role, this protein is one of the early assembly proteins of the 50S ribosomal subunit, although it is not seen to bind rRNA by itself. It is important during the early stages of 50S assembly. The polypeptide is Large ribosomal subunit protein uL13 (Wigglesworthia glossinidia brevipalpis).